We begin with the raw amino-acid sequence, 136 residues long: Small ribosomal subunit protein uS8c (136 aa).

The protein belongs to the universal ribosomal protein uS8 family. Part of the 30S ribosomal subunit.

It is found in the plastid. Its subcellular location is the chloroplast. Functionally, one of the primary rRNA binding proteins, it binds directly to 16S rRNA central domain where it helps coordinate assembly of the platform of the 30S subunit. The sequence is that of Small ribosomal subunit protein uS8c (rps8) from Oryza sativa subsp. indica (Rice).